We begin with the raw amino-acid sequence, 1165 residues long: Pesticidal crystal protein Cry1Da (1165 aa).

The protein belongs to the delta endotoxin family.

In terms of biological role, promotes colloidosmotic lysis by binding to the midgut epithelial cells of many lepidopteran larvae. This Bacillus thuringiensis subsp. aizawai protein is Pesticidal crystal protein Cry1Da (cry1Da).